A 500-amino-acid chain; its full sequence is MDRRLLLSALLFIALACSSNRVHGALNRHSFPEGFLFGTGTSAYQYEGAVDKRGQNIWDTFSRIPGKIADGSNADIANDFYHRYKEDLNLITAMNMDSFRFSIAWSRILPNGTISGGINKEGVEFYNSLINEVIAKGLKPFVTIFHFDTPQALEDKYGGFLSENIVKDYVDYADLCFSLFGDRVKLWNTFNEPTIFCMNGYATGIMAPGRCSPYASASCAAGGDSGREPYVAGHHLLVAHAEAVRLYRARYRAAHGGEVGITQVSHWFEPYDAGSAADRRARRRALDFMLGWFMHPVAHGEYPPAMRRLVGGRLPAFTAEQSEMLRGSFDFIGLNYYTSNYAVAAPPPNKLHPSYLTDNWVNATGYRNSIPIGPPAYTPIFFNYPPGLRELLLYVKRRYNNPTIYITENGTDEANNSTIPISEALKDETRIGFHYKHLQFVHKAIQEGVKVKGYFTWTFMDCFEFGDGFKDRFGLIYVDRATLARFRKKSSYWFADFLRR.

Positions 1 to 24 are cleaved as a signal peptide; that stretch reads MDRRLLLSALLFIALACSSNRVHG. Q45 contributes to the a beta-D-glucoside binding site. The N-linked (GlcNAc...) asparagine glycan is linked to N111. Residues H146 and 191–192 each bind a beta-D-glucoside; that span reads NE. The active-site Proton donor is the E192. An intrachain disulfide couples C211 to C219. Residue Y337 participates in a beta-D-glucoside binding. A glycan (N-linked (GlcNAc...) asparagine) is linked at N362. E408 serves as a coordination point for a beta-D-glucoside. E408 acts as the Nucleophile in catalysis. Residues N409, N415, and N416 are each glycosylated (N-linked (GlcNAc...) asparagine). Residues W457, 464 to 465, and F473 contribute to the a beta-D-glucoside site; that span reads EF.

Belongs to the glycosyl hydrolase 1 family.

The enzyme catalyses Hydrolysis of terminal, non-reducing beta-D-glucosyl residues with release of beta-D-glucose.. In Oryza sativa subsp. japonica (Rice), this protein is Beta-glucosidase 28 (BGLU28).